The following is a 76-amino-acid chain: Small ribosomal subunit protein bS16 (76 aa).

This sequence belongs to the bacterial ribosomal protein bS16 family.

The polypeptide is Small ribosomal subunit protein bS16 (Sulfurovum sp. (strain NBC37-1)).